The primary structure comprises 429 residues: Threonine synthase (429 aa).

Residue lysine 108 is modified to N6-(pyridoxal phosphate)lysine.

This sequence belongs to the threonine synthase family. Requires pyridoxal 5'-phosphate as cofactor.

It catalyses the reaction O-phospho-L-homoserine + H2O = L-threonine + phosphate. Its pathway is amino-acid biosynthesis; L-threonine biosynthesis; L-threonine from L-aspartate: step 5/5. Its function is as follows. Catalyzes the gamma-elimination of phosphate from L-phosphohomoserine and the beta-addition of water to produce L-threonine. The protein is Threonine synthase (thrC) of Buchnera aphidicola subsp. Schizaphis graminum (strain Sg).